The sequence spans 368 residues: 3-dehydroquinate synthase (368 aa).

NAD(+) is bound by residues Asp-69 to Lys-74, Gly-103 to Asp-107, Thr-127 to Thr-128, Lys-140, and Lys-149. Zn(2+)-binding residues include Glu-182, His-245, and His-262.

This sequence belongs to the sugar phosphate cyclases superfamily. Dehydroquinate synthase family. NAD(+) is required as a cofactor. Requires Co(2+) as cofactor. Zn(2+) serves as cofactor.

It is found in the cytoplasm. It carries out the reaction 7-phospho-2-dehydro-3-deoxy-D-arabino-heptonate = 3-dehydroquinate + phosphate. It functions in the pathway metabolic intermediate biosynthesis; chorismate biosynthesis; chorismate from D-erythrose 4-phosphate and phosphoenolpyruvate: step 2/7. In terms of biological role, catalyzes the conversion of 3-deoxy-D-arabino-heptulosonate 7-phosphate (DAHP) to dehydroquinate (DHQ). The protein is 3-dehydroquinate synthase of Pseudomonas aeruginosa (strain ATCC 15692 / DSM 22644 / CIP 104116 / JCM 14847 / LMG 12228 / 1C / PRS 101 / PAO1).